We begin with the raw amino-acid sequence, 170 residues long: Protein SprT (170 aa).

The SprT-like domain occupies Arg-19–Arg-163. Position 78 (His-78) interacts with Zn(2+). Glu-79 is a catalytic residue. His-82 lines the Zn(2+) pocket.

It belongs to the SprT family. It depends on Zn(2+) as a cofactor.

The protein resides in the cytoplasm. The polypeptide is Protein SprT (Erwinia tasmaniensis (strain DSM 17950 / CFBP 7177 / CIP 109463 / NCPPB 4357 / Et1/99)).